A 198-amino-acid chain; its full sequence is Zinc finger protein 41 homolog (198 aa).

Residues 1-12 (MEKPAGRKKKTP) are compositionally biased toward basic residues. A disordered region spans residues 1–55 (MEKPAGRKKKTPTPREEADVQKSALREEKVSGDRKPPERPTVPRKPRTEPCLSPE). Positions 13–38 (TPREEADVQKSALREEKVSGDRKPPE) are enriched in basic and acidic residues. 4 consecutive C2H2-type zinc fingers follow at residues 87–109 (YECSECGRIFKHKTDHIRHQRVH), 115–137 (FKCAQCGKAFRHSSDVTKHQRTH), 143–165 (FKCGECGKAFNCGSNLLKHQKTH), and 171–193 (YECTHCGKAFAYSSCLIRHQKRH).

This sequence belongs to the krueppel C2H2-type zinc-finger protein family.

The protein resides in the nucleus. Functionally, a putative DNA-binding regulatory protein associated with meiosis in spermatogenesis. This Homo sapiens (Human) protein is Zinc finger protein 41 homolog (ZFP41).